The sequence spans 525 residues: Glutamate--cysteine ligase (525 aa).

The protein belongs to the glutamate--cysteine ligase type 1 family. Type 1 subfamily.

It catalyses the reaction L-cysteine + L-glutamate + ATP = gamma-L-glutamyl-L-cysteine + ADP + phosphate + H(+). It functions in the pathway sulfur metabolism; glutathione biosynthesis; glutathione from L-cysteine and L-glutamate: step 1/2. This Pseudoalteromonas translucida (strain TAC 125) protein is Glutamate--cysteine ligase.